Here is a 392-residue protein sequence, read N- to C-terminus: N-acetylneuraminate epimerase (392 aa).

The N-terminal stretch at 1-35 (MTQIYHQYKKKLSTKVILLSALTLCITFSLPYANA) is a signal peptide. Kelch repeat units follow at residues 56–100 (HLYV…VALS), 102–155 (KLYV…TTLN), 157–192 (TQALLLGGVNKAIFDGYFTDLAAAGGNETQKNAVVN), 193–238 (AYFD…TAKK), 241–290 (LILI…LAGA), 312–361 (QQFN…QDKD), and 363–392 (VILLGGETSDGVATSAVTQLSWQGGKLHLE). E247 functions as the Proton acceptor in the catalytic mechanism.

Belongs to the NanM family. As to quaternary structure, homodimer.

The protein resides in the periplasm. It catalyses the reaction N-acetyl-alpha-neuraminate = N-acetyl-beta-neuraminate. Converts alpha-N-acetylneuranimic acid (Neu5Ac) to the beta-anomer, accelerating the equilibrium between the alpha- and beta-anomers. Probably facilitates sialidase-negative bacteria to compete successfully for limited amounts of extracellular Neu5Ac, which is likely taken up in the beta-anomer. In addition, the rapid removal of sialic acid from solution might be advantageous to the bacterium to damp down host responses. The chain is N-acetylneuraminate epimerase from Yersinia enterocolitica serotype O:8 / biotype 1B (strain NCTC 13174 / 8081).